A 320-amino-acid chain; its full sequence is Retron Ec86 reverse transcriptase (320 aa).

In terms of domain architecture, Reverse transcriptase spans 34–248 (VETLRLLIYT…SQRKVTGLVI (215 aa)). The Mg(2+) site is built by Asp-119, Asp-197, and Asp-198. The interval 230-320 (KKTCISGPRS…GKNPLNKAKT (91 aa)) is necessary and required for recognition and binding of RNA.

The protein belongs to the bacterial reverse transcriptase family.

It catalyses the reaction DNA(n) + a 2'-deoxyribonucleoside 5'-triphosphate = DNA(n+1) + diphosphate. Reverse transcriptase (RT) component of antiviral defense system retron Ec86, composed of a non-coding RNA (ncRNA), a ribosyltransferase/DNA-binding protein and this RT. Expression of the 3-gene retron confers protection against bacteriophage T5. At multiplicity of infection (MOI) of 0.02 cultures grow normally when infected with T5 without collapsing, at MOI 2 cultures enter growth stasis. Responsible for synthesis of msDNA (a branched molecule with RNA linked by a 2',5'-phosphodiester bond to ssDNA). The retron transcript serves as primer (from a conserved internal G residue) and template for the reaction, and codes for the RT. Recognizes only its cognate RNA as a primer template. Overexpression of the ncRNA and RT (without the ribosyltransferase), which leads to increased levels of msDNA, is mutagenic in vivo. This may be due to a mismatch in the msDNA stem which binds and sequesters MutS and/or MutL. This is Retron Ec86 reverse transcriptase from Escherichia coli.